Reading from the N-terminus, the 512-residue chain is Maturase K (512 aa).

It belongs to the intron maturase 2 family. MatK subfamily.

It localises to the plastid. It is found in the chloroplast. Functionally, usually encoded in the trnK tRNA gene intron. Probably assists in splicing its own and other chloroplast group II introns. The sequence is that of Maturase K from Lemna minor (Common duckweed).